Consider the following 284-residue polypeptide: Exported repetitive protein (284 aa).

The first 22 residues, 1–22, serve as a signal peptide directing secretion; that stretch reads MPNRRRRKLSTAMSAVAALAVA. The Extracellular segment spans residues 23-252; it reads SPCAYFLVYE…MPSIMQAVQN (230 aa). Positions 80–216 are disordered; sequence TGSGDASTGL…SPATTSTGGG (137 aa). Residues 86–110 show a composition bias toward low complexity; sequence STGLTGPGLTSPGLTSPGLTSPGLT. A run of 12 repeats spans residues 92-96, 97-101, 102-106, 107-111, 112-116, 117-121, 144-148, 149-153, 154-158, 159-163, 164-168, and 169-173. A 6 X 5 AA tandem repeats of P-[GA]-L-T-S region spans residues 92 to 121; that stretch reads PGLTSPGLTSPGLTSPGLTDPALTSPGLTP. The interval 144–173 is 6 X 5 AA approximate tandem repeats of P-[ATG]-[LG]-X-X; sequence PALTNPALTSPTGATPGLTSPTGLDPALGG. Residues 145 to 165 show a composition bias toward polar residues; it reads ALTNPALTSPTGATPGLTSPT. Residues 202–212 show a composition bias toward low complexity; sequence GTIPSSPATTS. Residues 253–273 traverse the membrane as a helical segment; the sequence is GGAAAPAASPPVPPIPAAAAV. Residues 274 to 284 lie on the Cytoplasmic side of the membrane; the sequence is PPTDPITVPVA.

To M.leprae 28 kDa antigen.

Its subcellular location is the cell membrane. Surface-exposed protein required for multiplication and intracellular growth. This is Exported repetitive protein (erp) from Mycobacterium bovis (strain ATCC BAA-935 / AF2122/97).